Here is a 291-residue protein sequence, read N- to C-terminus: Nitrogenase iron protein 1 (291 aa).

An ATP-binding site is contributed by 10-17 (GKGGIGKS). Cysteine 98 contacts [4Fe-4S] cluster. Residue arginine 101 is modified to ADP-ribosylarginine; by dinitrogenase reductase ADP-ribosyltransferase. Residue cysteine 133 coordinates [4Fe-4S] cluster.

It belongs to the NifH/BchL/ChlL family. In terms of assembly, homodimer. [4Fe-4S] cluster serves as cofactor. Post-translationally, the reversible ADP-ribosylation of Arg-101 inactivates the nitrogenase reductase and regulates nitrogenase activity.

The enzyme catalyses N2 + 8 reduced [2Fe-2S]-[ferredoxin] + 16 ATP + 16 H2O = H2 + 8 oxidized [2Fe-2S]-[ferredoxin] + 2 NH4(+) + 16 ADP + 16 phosphate + 6 H(+). Functionally, the key enzymatic reactions in nitrogen fixation are catalyzed by the nitrogenase complex, which has 2 components: the iron protein (component 2) and a component 1 which is either a molybdenum-iron protein, a vanadium-iron, or an iron-iron protein. The polypeptide is Nitrogenase iron protein 1 (nifH1) (Azotobacter chroococcum mcd 1).